The sequence spans 477 residues: Cytochrome P450 708A2 (477 aa).

The helical transmembrane segment at 3 to 23 (FVWSAAVWVIAVAAVVISKWL) threads the bilayer. Residue cysteine 426 participates in heme binding.

Belongs to the cytochrome P450 family. Heme is required as a cofactor. Expressed primarily in the root epidermis.

The protein resides in the membrane. Hydroxylates thalianol into thalian-diol. This Arabidopsis thaliana (Mouse-ear cress) protein is Cytochrome P450 708A2 (CYP708A2).